Here is a 308-residue protein sequence, read N- to C-terminus: Porphobilinogen deaminase (308 aa).

The residue at position 240 (cysteine 240) is an S-(dipyrrolylmethanemethyl)cysteine.

The protein belongs to the HMBS family. In terms of assembly, monomer. Requires dipyrromethane as cofactor.

The enzyme catalyses 4 porphobilinogen + H2O = hydroxymethylbilane + 4 NH4(+). It participates in porphyrin-containing compound metabolism; protoporphyrin-IX biosynthesis; coproporphyrinogen-III from 5-aminolevulinate: step 2/4. In terms of biological role, tetrapolymerization of the monopyrrole PBG into the hydroxymethylbilane pre-uroporphyrinogen in several discrete steps. The protein is Porphobilinogen deaminase of Campylobacter hominis (strain ATCC BAA-381 / DSM 21671 / CCUG 45161 / LMG 19568 / NCTC 13146 / CH001A).